A 247-amino-acid polypeptide reads, in one-letter code: UPF0259 membrane protein BUsg_265 (247 aa).

The next 6 helical transmembrane spans lie at isoleucine 20–leucine 40, isoleucine 82–leucine 102, isoleucine 114–isoleucine 134, phenylalanine 137–leucine 157, isoleucine 188–serine 208, and phenylalanine 217–leucine 237.

Belongs to the UPF0259 family.

The protein resides in the cell membrane. The chain is UPF0259 membrane protein BUsg_265 from Buchnera aphidicola subsp. Schizaphis graminum (strain Sg).